The following is a 396-amino-acid chain: Stearoyl-[acyl-carrier-protein] 9-desaturase, chloroplastic (396 aa).

The N-terminal 33 residues, 1 to 33 (MAIRINTATFQSDLYRSFAFPQPKPLRSPKFAM), are a transit peptide targeting the chloroplast. 6 residues coordinate Fe cation: glutamate 138, glutamate 176, histidine 179, glutamate 229, glutamate 262, and histidine 265.

The protein belongs to the fatty acid desaturase type 2 family. In terms of assembly, homodimer. Fe(2+) is required as a cofactor.

Its subcellular location is the plastid. The protein resides in the chloroplast. The enzyme catalyses octadecanoyl-[ACP] + 2 reduced [2Fe-2S]-[ferredoxin] + O2 + 2 H(+) = (9Z)-octadecenoyl-[ACP] + 2 oxidized [2Fe-2S]-[ferredoxin] + 2 H2O. The protein operates within lipid metabolism; fatty acid metabolism. Converts stearoyl-ACP to oleoyl-ACP by introduction of a cis double bond between carbons 9 and 10 of the acyl chain. This Helianthus annuus (Common sunflower) protein is Stearoyl-[acyl-carrier-protein] 9-desaturase, chloroplastic.